Here is a 992-residue protein sequence, read N- to C-terminus: Ankyrin repeat domain-containing protein 18A (992 aa).

ANK repeat units lie at residues 67–96 (KDRT…QIDI), 100–129 (LNRT…NPNI), 133–162 (YGNT…NIEA), 166–195 (EGNT…NIHA), and 199–228 (FKRT…RISS). Residues 262–320 (NHLRNDNQETAAMKPANLKKRKERAKAEHNLKVASEEKQERLQRSENKQPQDSQSYGKK) are disordered. Coiled coils occupy residues 278–310 (NLKK…ENKQ), 378–618 (KMIT…AERE), 683–713 (ISLL…CLEM), and 743–899 (FKKL…EAFA). Residues 286 to 310 (AKAEHNLKVASEEKQERLQRSENKQ) are compositionally biased toward basic and acidic residues.

This is Ankyrin repeat domain-containing protein 18A (ANKRD18A) from Homo sapiens (Human).